The primary structure comprises 305 residues: Glycine--tRNA ligase alpha subunit (305 aa).

Belongs to the class-II aminoacyl-tRNA synthetase family. As to quaternary structure, tetramer of two alpha and two beta subunits.

It is found in the cytoplasm. The catalysed reaction is tRNA(Gly) + glycine + ATP = glycyl-tRNA(Gly) + AMP + diphosphate. The chain is Glycine--tRNA ligase alpha subunit from Ligilactobacillus salivarius (strain UCC118) (Lactobacillus salivarius).